A 268-amino-acid chain; its full sequence is 4-hydroxy-tetrahydrodipicolinate reductase (268 aa).

NAD(+)-binding positions include 9 to 14, 99 to 101, and 123 to 126; these read GAAGRM, GTT, and ASNF. Catalysis depends on histidine 156, which acts as the Proton donor/acceptor. Position 157 (histidine 157) interacts with (S)-2,3,4,5-tetrahydrodipicolinate. Catalysis depends on lysine 160, which acts as the Proton donor. 166-167 is a binding site for (S)-2,3,4,5-tetrahydrodipicolinate; that stretch reads GT.

The protein belongs to the DapB family.

The protein resides in the cytoplasm. It catalyses the reaction (S)-2,3,4,5-tetrahydrodipicolinate + NAD(+) + H2O = (2S,4S)-4-hydroxy-2,3,4,5-tetrahydrodipicolinate + NADH + H(+). It carries out the reaction (S)-2,3,4,5-tetrahydrodipicolinate + NADP(+) + H2O = (2S,4S)-4-hydroxy-2,3,4,5-tetrahydrodipicolinate + NADPH + H(+). The protein operates within amino-acid biosynthesis; L-lysine biosynthesis via DAP pathway; (S)-tetrahydrodipicolinate from L-aspartate: step 4/4. In terms of biological role, catalyzes the conversion of 4-hydroxy-tetrahydrodipicolinate (HTPA) to tetrahydrodipicolinate. This is 4-hydroxy-tetrahydrodipicolinate reductase from Saccharophagus degradans (strain 2-40 / ATCC 43961 / DSM 17024).